The primary structure comprises 224 residues: DNA mismatch repair protein MutH (224 aa).

Belongs to the MutH family.

It is found in the cytoplasm. Functionally, sequence-specific endonuclease that cleaves unmethylated GATC sequences. It is involved in DNA mismatch repair. This is DNA mismatch repair protein MutH from Histophilus somni (strain 129Pt) (Haemophilus somnus).